The following is a 300-amino-acid chain: Phosphoenolpyruvate phosphomutase (300 aa).

A propeptide spanning residues 1–10 is cleaved from the precursor; it reads MLANSLKSFF. Residue aspartate 66 is the Nucleophile of the active site.

This sequence belongs to the isocitrate lyase/PEP mutase superfamily. PEP mutase family.

It catalyses the reaction phosphoenolpyruvate + H(+) = 3-phosphonopyruvate. Its pathway is phosphorus metabolism; phosphonate biosynthesis. In terms of biological role, formation of a carbon-phosphorus bond by converting phosphoenolpyruvate (PEP) to phosphonopyruvate (P-Pyr). This chain is Phosphoenolpyruvate phosphomutase (PEPM), found in Tetrahymena pyriformis.